The sequence spans 485 residues: Ribulose bisphosphate carboxylase large chain (485 aa).

2 residues coordinate substrate: N124 and T174. K176 functions as the Proton acceptor in the catalytic mechanism. Residue K178 coordinates substrate. Mg(2+) is bound by residues K202, D204, and E205. An N6-carboxylysine modification is found at K202. Catalysis depends on H294, which acts as the Proton acceptor. Substrate contacts are provided by R295, H327, and S379.

It belongs to the RuBisCO large chain family. Type I subfamily. As to quaternary structure, heterohexadecamer of 8 large chains and 8 small chains. The cofactor is Mg(2+).

The catalysed reaction is 2 (2R)-3-phosphoglycerate + 2 H(+) = D-ribulose 1,5-bisphosphate + CO2 + H2O. The enzyme catalyses D-ribulose 1,5-bisphosphate + O2 = 2-phosphoglycolate + (2R)-3-phosphoglycerate + 2 H(+). RuBisCO catalyzes two reactions: the carboxylation of D-ribulose 1,5-bisphosphate, the primary event in carbon dioxide fixation, as well as the oxidative fragmentation of the pentose substrate. Both reactions occur simultaneously and in competition at the same active site. The protein is Ribulose bisphosphate carboxylase large chain of Rhodopseudomonas palustris (strain TIE-1).